A 283-amino-acid chain; its full sequence is Thymidylate synthase (283 aa).

Residue arginine 22 coordinates dUMP. Cysteine 160 functions as the Nucleophile in the catalytic mechanism. DUMP contacts are provided by residues 180-183, asparagine 191, and 221-223; these read RSCD and HIY. (6R)-5,10-methylene-5,6,7,8-tetrahydrofolate is bound at residue aspartate 183. Serine 282 contributes to the (6R)-5,10-methylene-5,6,7,8-tetrahydrofolate binding site.

Belongs to the thymidylate synthase family. Bacterial-type ThyA subfamily. As to quaternary structure, homodimer.

Its subcellular location is the cytoplasm. It carries out the reaction dUMP + (6R)-5,10-methylene-5,6,7,8-tetrahydrofolate = 7,8-dihydrofolate + dTMP. It functions in the pathway pyrimidine metabolism; dTTP biosynthesis. In terms of biological role, catalyzes the reductive methylation of 2'-deoxyuridine-5'-monophosphate (dUMP) to 2'-deoxythymidine-5'-monophosphate (dTMP) while utilizing 5,10-methylenetetrahydrofolate (mTHF) as the methyl donor and reductant in the reaction, yielding dihydrofolate (DHF) as a by-product. This enzymatic reaction provides an intracellular de novo source of dTMP, an essential precursor for DNA biosynthesis. The sequence is that of Thymidylate synthase from Vibrio vulnificus (strain CMCP6).